The chain runs to 303 residues: tRNA dimethylallyltransferase 1 (303 aa).

Glycine 17 to threonine 24 contributes to the ATP binding site. Threonine 19–threonine 24 serves as a coordination point for substrate. An interaction with substrate tRNA region spans residues aspartate 42–glutamine 45.

It belongs to the IPP transferase family. Monomer. The cofactor is Mg(2+).

It carries out the reaction adenosine(37) in tRNA + dimethylallyl diphosphate = N(6)-dimethylallyladenosine(37) in tRNA + diphosphate. Catalyzes the transfer of a dimethylallyl group onto the adenine at position 37 in tRNAs that read codons beginning with uridine, leading to the formation of N6-(dimethylallyl)adenosine (i(6)A). This is tRNA dimethylallyltransferase 1 from Hahella chejuensis (strain KCTC 2396).